Reading from the N-terminus, the 437-residue chain is GTPase Obg (437 aa).

The region spanning 2–160 is the Obg domain; sequence SMFLDTAKIS…RQLELELKIL (159 aa). Residues 161 to 338 form the OBG-type G domain; the sequence is ADVGLVGFPS…LLEATAELLA (178 aa). GTP-binding positions include 167–174, 192–196, 214–217, 284–287, and 319–321; these read GFPSVGKS, FTTIV, DLPG, NKMD, and SSL. Residues serine 174 and threonine 194 each coordinate Mg(2+). Residues 359–437 enclose the OCT domain; sequence GFAKTEKDFE…IGKFEFEFVD (79 aa).

This sequence belongs to the TRAFAC class OBG-HflX-like GTPase superfamily. OBG GTPase family. In terms of assembly, monomer. It depends on Mg(2+) as a cofactor.

It localises to the cytoplasm. Its function is as follows. An essential GTPase which binds GTP, GDP and possibly (p)ppGpp with moderate affinity, with high nucleotide exchange rates and a fairly low GTP hydrolysis rate. Plays a role in control of the cell cycle, stress response, ribosome biogenesis and in those bacteria that undergo differentiation, in morphogenesis control. This chain is GTPase Obg, found in Streptococcus pyogenes serotype M2 (strain MGAS10270).